A 59-amino-acid polypeptide reads, in one-letter code: Cecropin-B2 (59 aa).

Positions 1-23 (MNFNKLFLIVILAALLLLGQTEA) are cleaved as a signal peptide. Leu57 carries the post-translational modification Leucine amide.

The protein belongs to the cecropin family.

The protein localises to the secreted. Its function is as follows. Cecropins have lytic and antibacterial activity against several Gram-positive and Gram-negative bacteria. This chain is Cecropin-B2 (CECB2), found in Culex pipiens pipiens (Northern house mosquito).